A 247-amino-acid polypeptide reads, in one-letter code: Ribosomal RNA large subunit methyltransferase E (247 aa).

A disordered region spans residues M1–Y21. Residues G88, W90, D111, D127, and D151 each coordinate S-adenosyl-L-methionine. K191 functions as the Proton acceptor in the catalytic mechanism.

This sequence belongs to the class I-like SAM-binding methyltransferase superfamily. RNA methyltransferase RlmE family.

The protein localises to the cytoplasm. The catalysed reaction is uridine(2552) in 23S rRNA + S-adenosyl-L-methionine = 2'-O-methyluridine(2552) in 23S rRNA + S-adenosyl-L-homocysteine + H(+). Specifically methylates the uridine in position 2552 of 23S rRNA at the 2'-O position of the ribose in the fully assembled 50S ribosomal subunit. This chain is Ribosomal RNA large subunit methyltransferase E, found in Bartonella henselae (strain ATCC 49882 / DSM 28221 / CCUG 30454 / Houston 1) (Rochalimaea henselae).